A 343-amino-acid polypeptide reads, in one-letter code: Fanconi anemia group F protein (343 aa).

In terms of assembly, belongs to the multisubunit FA complex composed of FANCA, FANCB, FANCC, FANCE, FANCF, FANCG, FANCL/PHF9 and FANCM. In complex with FANCA, FANCG and FANCL, but not with FANCC, nor FANCE, interacts with HES1; this interaction may be essential for the stability and nuclear localization of FA core complex proteins.

It localises to the nucleus. In terms of biological role, DNA repair protein that may operate in a postreplication repair or a cell cycle checkpoint function. May be implicated in interstrand DNA cross-link repair and in the maintenance of normal chromosome stability. This chain is Fanconi anemia group F protein, found in Mus musculus (Mouse).